A 319-amino-acid polypeptide reads, in one-letter code: MVKLASNENPYGPSPKAIEAFRSYSDLHIYPNPEYRELREKISDYTGWDADRVVVGAGIDGILETLFRILIDEGDEVVIPIPTFPYYHILTKLSCGKEVLVRRGENYRIDESIFDAITQKTKIILICNPNNPTGNAEDAKLIEELVNSTNALIFLDEAYVEFSDVSFSVDAENVVIARTFSKAFGLANLRIGYALLPEWLVSPFRAAMTPFPLSTPAAKAAEAALDDVEWMRSCVGRIKAERERLYKELKKLVEVNLSQANFLFFESPVENLAEELLKRGVIVRDCSSFVGCGNHIRVTVGRPEENDMFLEALKEVLGC.

Residue Lys-182 is modified to N6-(pyridoxal phosphate)lysine.

This sequence belongs to the class-II pyridoxal-phosphate-dependent aminotransferase family. Histidinol-phosphate aminotransferase subfamily. Pyridoxal 5'-phosphate is required as a cofactor.

The catalysed reaction is L-histidinol phosphate + 2-oxoglutarate = 3-(imidazol-4-yl)-2-oxopropyl phosphate + L-glutamate. Its pathway is amino-acid biosynthesis; L-histidine biosynthesis; L-histidine from 5-phospho-alpha-D-ribose 1-diphosphate: step 7/9. In Archaeoglobus fulgidus (strain ATCC 49558 / DSM 4304 / JCM 9628 / NBRC 100126 / VC-16), this protein is Histidinol-phosphate aminotransferase 1 (hisC1).